The sequence spans 166 residues: uncharacterized protein (166 aa).

3 4Fe-4S ferredoxin-type domains span residues 3–33 (MKKI…GRIA), 37–67 (KDGK…EHKD), and 68–97 (GYVY…MEDK). Residues Cys-13, Cys-16, Cys-19, Cys-23, Cys-46, Cys-49, Cys-54, Cys-58, Cys-77, Cys-80, Cys-83, Cys-87, Cys-101, Cys-104, Cys-111, and Cys-115 each coordinate [4Fe-4S] cluster.

[4Fe-4S] cluster serves as cofactor.

This is an uncharacterized protein from Methanocaldococcus jannaschii (strain ATCC 43067 / DSM 2661 / JAL-1 / JCM 10045 / NBRC 100440) (Methanococcus jannaschii).